Here is a 248-residue protein sequence, read N- to C-terminus: Ubiquinone biosynthesis O-methyltransferase (248 aa).

S-adenosyl-L-methionine contacts are provided by arginine 41, glycine 72, aspartate 93, and methionine 136.

Belongs to the methyltransferase superfamily. UbiG/COQ3 family.

It carries out the reaction a 3-demethylubiquinol + S-adenosyl-L-methionine = a ubiquinol + S-adenosyl-L-homocysteine + H(+). The catalysed reaction is a 3-(all-trans-polyprenyl)benzene-1,2-diol + S-adenosyl-L-methionine = a 2-methoxy-6-(all-trans-polyprenyl)phenol + S-adenosyl-L-homocysteine + H(+). Its pathway is cofactor biosynthesis; ubiquinone biosynthesis. O-methyltransferase that catalyzes the 2 O-methylation steps in the ubiquinone biosynthetic pathway. In Sinorhizobium medicae (strain WSM419) (Ensifer medicae), this protein is Ubiquinone biosynthesis O-methyltransferase.